A 225-amino-acid chain; its full sequence is Lipoarabinomannan carrier protein LprG (225 aa).

The first 21 residues, methionine 1–glycine 21, serve as a signal peptide directing secretion. A lipid anchor (N-palmitoyl cysteine) is attached at cysteine 22. Cysteine 22 is lipidated: S-diacylglycerol cysteine.

This sequence belongs to the LppX/LprAFG lipoprotein family. Post-translationally, modified by Lgt on Cys-22 with an S-linked diacylglyceral, signal peptide is removed by LspA, Cys-22 is further modifed with a fatty acid on its amino group by Lnt yielding a triacylated protein.

The protein localises to the cell inner membrane. Functionally, helps membrane protein MAB_2807 (P55) transport triacylglycerides (TAG) across the inner cell membrane into the periplasm and probably ultimately to the outer membrane. Binds TAG in its hydrophobic cavity and transfers it between lipid bilayers. TAG probably regulates lipid metabolism and growth regulation and plays a structural role in the outer membrane. Also binds mannosides, lipoarabinomannan and lipomannan and various glycolipids in the same cavity. The polypeptide is Lipoarabinomannan carrier protein LprG (Mycobacteroides abscessus (strain ATCC 19977 / DSM 44196 / CCUG 20993 / CIP 104536 / JCM 13569 / NCTC 13031 / TMC 1543 / L948) (Mycobacterium abscessus)).